A 257-amino-acid polypeptide reads, in one-letter code: Na(+)-translocating NADH-quinone reductase subunit C (257 aa).

Residues 12–32 (LFVVIALSLVCSIIVSAAAVG) traverse the membrane as a helical segment. T225 is modified (FMN phosphoryl threonine).

The protein belongs to the NqrC family. Composed of six subunits; NqrA, NqrB, NqrC, NqrD, NqrE and NqrF. Requires FMN as cofactor.

It localises to the cell inner membrane. The catalysed reaction is a ubiquinone + n Na(+)(in) + NADH + H(+) = a ubiquinol + n Na(+)(out) + NAD(+). NQR complex catalyzes the reduction of ubiquinone-1 to ubiquinol by two successive reactions, coupled with the transport of Na(+) ions from the cytoplasm to the periplasm. NqrA to NqrE are probably involved in the second step, the conversion of ubisemiquinone to ubiquinol. This chain is Na(+)-translocating NADH-quinone reductase subunit C, found in Vibrio cholerae serotype O1 (strain ATCC 39541 / Classical Ogawa 395 / O395).